Consider the following 118-residue polypeptide: Large ribosomal subunit protein bL20 (118 aa).

Belongs to the bacterial ribosomal protein bL20 family.

In terms of biological role, binds directly to 23S ribosomal RNA and is necessary for the in vitro assembly process of the 50S ribosomal subunit. It is not involved in the protein synthesizing functions of that subunit. The polypeptide is Large ribosomal subunit protein bL20 (rplT) (Thermotoga maritima (strain ATCC 43589 / DSM 3109 / JCM 10099 / NBRC 100826 / MSB8)).